Consider the following 230-residue polypeptide: Cytidylate kinase (230 aa).

10 to 18 (GFSSTGKST) contributes to the ATP binding site.

It belongs to the cytidylate kinase family. Type 1 subfamily.

It is found in the cytoplasm. The catalysed reaction is CMP + ATP = CDP + ADP. It catalyses the reaction dCMP + ATP = dCDP + ADP. The sequence is that of Cytidylate kinase from Flavobacterium johnsoniae (strain ATCC 17061 / DSM 2064 / JCM 8514 / BCRC 14874 / CCUG 350202 / NBRC 14942 / NCIMB 11054 / UW101) (Cytophaga johnsonae).